Here is a 155-residue protein sequence, read N- to C-terminus: SsrA-binding protein (155 aa).

This sequence belongs to the SmpB family.

The protein localises to the cytoplasm. Functionally, required for rescue of stalled ribosomes mediated by trans-translation. Binds to transfer-messenger RNA (tmRNA), required for stable association of tmRNA with ribosomes. tmRNA and SmpB together mimic tRNA shape, replacing the anticodon stem-loop with SmpB. tmRNA is encoded by the ssrA gene; the 2 termini fold to resemble tRNA(Ala) and it encodes a 'tag peptide', a short internal open reading frame. During trans-translation Ala-aminoacylated tmRNA acts like a tRNA, entering the A-site of stalled ribosomes, displacing the stalled mRNA. The ribosome then switches to translate the ORF on the tmRNA; the nascent peptide is terminated with the 'tag peptide' encoded by the tmRNA and targeted for degradation. The ribosome is freed to recommence translation, which seems to be the essential function of trans-translation. The chain is SsrA-binding protein from Gloeothece citriformis (strain PCC 7424) (Cyanothece sp. (strain PCC 7424)).